The chain runs to 536 residues: 2-isopropylmalate synthase (536 aa).

One can recognise a Pyruvate carboxyltransferase domain in the interval 8 to 273; sequence VLIFDTTLRD…FFGRDPESPT (266 aa). The Mn(2+) site is built by Asp17, His208, His210, and Asn244. Residues 408-536 form a regulatory domain region; that stretch reads QLQLVQVSCG…PQHDLIKANL (129 aa).

Belongs to the alpha-IPM synthase/homocitrate synthase family. LeuA type 1 subfamily. Homodimer. Mn(2+) is required as a cofactor.

The protein localises to the cytoplasm. The enzyme catalyses 3-methyl-2-oxobutanoate + acetyl-CoA + H2O = (2S)-2-isopropylmalate + CoA + H(+). The protein operates within amino-acid biosynthesis; L-leucine biosynthesis; L-leucine from 3-methyl-2-oxobutanoate: step 1/4. Catalyzes the condensation of the acetyl group of acetyl-CoA with 3-methyl-2-oxobutanoate (2-ketoisovalerate) to form 3-carboxy-3-hydroxy-4-methylpentanoate (2-isopropylmalate). The sequence is that of 2-isopropylmalate synthase from Prochlorococcus marinus (strain MIT 9211).